Here is a 70-residue protein sequence, read N- to C-terminus: ATP synthase subunit c (70 aa).

2 helical membrane passes run 4-24 and 47-67; these read IAAAIAIGLSALGAGIGNGLI and FIGIGLVEALPILGLVISFIV.

The protein belongs to the ATPase C chain family. As to quaternary structure, F-type ATPases have 2 components, F(1) - the catalytic core - and F(0) - the membrane proton channel. F(1) has five subunits: alpha(3), beta(3), gamma(1), delta(1), epsilon(1). F(0) has three main subunits: a(1), b(2) and c(10-14). The alpha and beta chains form an alternating ring which encloses part of the gamma chain. F(1) is attached to F(0) by a central stalk formed by the gamma and epsilon chains, while a peripheral stalk is formed by the delta and b chains.

It localises to the cell membrane. Functionally, f(1)F(0) ATP synthase produces ATP from ADP in the presence of a proton or sodium gradient. F-type ATPases consist of two structural domains, F(1) containing the extramembraneous catalytic core and F(0) containing the membrane proton channel, linked together by a central stalk and a peripheral stalk. During catalysis, ATP synthesis in the catalytic domain of F(1) is coupled via a rotary mechanism of the central stalk subunits to proton translocation. Key component of the F(0) channel; it plays a direct role in translocation across the membrane. A homomeric c-ring of between 10-14 subunits forms the central stalk rotor element with the F(1) delta and epsilon subunits. The chain is ATP synthase subunit c from Staphylococcus carnosus (strain TM300).